A 269-amino-acid chain; its full sequence is Shikimate dehydrogenase (NADP(+)) (269 aa).

Shikimate is bound by residues 17 to 19 and threonine 64; that span reads SKS. Lysine 68 serves as the catalytic Proton acceptor. Glutamate 80 is a binding site for NADP(+). 2 residues coordinate shikimate: asparagine 89 and aspartate 105. Residues 130 to 134, 154 to 159, and methionine 213 each bind NADP(+); these read GAGGA and NRTHAK. Tyrosine 215 is a shikimate binding site. Glycine 237 provides a ligand contact to NADP(+).

This sequence belongs to the shikimate dehydrogenase family. In terms of assembly, homodimer.

The enzyme catalyses shikimate + NADP(+) = 3-dehydroshikimate + NADPH + H(+). The protein operates within metabolic intermediate biosynthesis; chorismate biosynthesis; chorismate from D-erythrose 4-phosphate and phosphoenolpyruvate: step 4/7. Its function is as follows. Involved in the biosynthesis of the chorismate, which leads to the biosynthesis of aromatic amino acids. Catalyzes the reversible NADPH linked reduction of 3-dehydroshikimate (DHSA) to yield shikimate (SA). This is Shikimate dehydrogenase (NADP(+)) from Neisseria pharyngis.